An 826-amino-acid polypeptide reads, in one-letter code: E3 ubiquitin ligase PARAQUAT TOLERANCE 3 (826 aa).

In terms of domain architecture, DWNN spans 3-76; that stretch reads IYYKFKSARD…NTSVLIRRVP (74 aa). The CCHC-type zinc finger occupies 203 to 216; sequence CHRCNVSGHFIQHC. Phosphoserine is present on Ser-278. An RING-type; degenerate zinc finger spans residues 288-326; sequence CPLCKEVMRDAALASKCCLKSYCDKCIRDHIIAKSMCVC. 3 stretches are compositionally biased toward polar residues: residues 356 to 365, 396 to 406, and 435 to 454; these read SAENAGSMCQ, PSNNNETSTLK, and NIQG…NTQP. Disordered stretches follow at residues 356–406, 435–488, and 585–826; these read SAEN…STLK, NIQG…GPDY, and HPIM…RARA. Ser-397 bears the Phosphoserine mark. Basic and acidic residues predominate over residues 588 to 624; that stretch reads MGREEFEAKKTEMKRKRENEIRRSEGGNVVRDSEKSR. Over residues 625 to 635 the composition is skewed to polar residues; it reads IMNNSAVTSSP. Residues 651–667 are compositionally biased toward basic and acidic residues; that stretch reads DYDRRRRSDRSSPERQS. 2 short sequence motifs (nuclear localization signal) span residues 668-675 and 695-702; these read SRRFTSPP and DRRRDRPR. Basic and acidic residues predominate over residues 680 to 706; it reads RKSERDRHHDLDSEHDRRRDRPRETDR. Basic residues predominate over residues 790 to 799; it reads FKRKPSRYKR. Residue Ser-800 is modified to Phosphoserine. The span at 809–826 shows a compositional bias: basic and acidic residues; sequence GDEHFRHSKRSKGERARA.

Interacts with PRMT13/PRMT4B in the nucleus. As to expression, expressed constitutively in both shoot and root tissues.

Its subcellular location is the nucleus. It carries out the reaction S-ubiquitinyl-[E2 ubiquitin-conjugating enzyme]-L-cysteine + [acceptor protein]-L-lysine = [E2 ubiquitin-conjugating enzyme]-L-cysteine + N(6)-ubiquitinyl-[acceptor protein]-L-lysine.. In terms of biological role, E3 ubiquitin ligase acting as a negative regulator of oxidative stress tolerance, probably by mediating 26S proteasome-mediated degradation of PRMT13/PRMT4B, thus preventing APX1 and GPX1 accumulation via the reduction of histone H3 methylation (H3R17me2a). Confers sensitivity to cadmium CdCl(2) and salt NaCl stresses. This chain is E3 ubiquitin ligase PARAQUAT TOLERANCE 3, found in Arabidopsis thaliana (Mouse-ear cress).